The sequence spans 301 residues: Probable alpha-L-glutamate ligase (301 aa).

An ATP-grasp domain is found at 104–287 (LQFLSRKGID…IAGMIIEFIE (184 aa)). Residues Lys141, 178-179 (EF), Asp187, and 211-213 (RSN) each bind ATP. Residues Asp248, Glu260, and Asn262 each contribute to the Mg(2+) site. Residues Asp248, Glu260, and Asn262 each coordinate Mn(2+).

It belongs to the RimK family. Requires Mg(2+) as cofactor. It depends on Mn(2+) as a cofactor.

This is Probable alpha-L-glutamate ligase from Coxiella burnetii (strain CbuK_Q154) (Coxiella burnetii (strain Q154)).